We begin with the raw amino-acid sequence, 749 residues long: 5-methyltetrahydropteroyltriglutamate--homocysteine methyltransferase (749 aa).

5-methyltetrahydropteroyltri-L-glutamate-binding positions include 15-18 (RELK) and Lys114. L-homocysteine-binding positions include 425-427 (IGS) and Glu478. L-methionine contacts are provided by residues 425 to 427 (IGS) and Glu478. Trp555 provides a ligand contact to 5-methyltetrahydropteroyltri-L-glutamate. Asp593 contributes to the L-homocysteine binding site. An L-methionine-binding site is contributed by Asp593. Glu599 serves as a coordination point for 5-methyltetrahydropteroyltri-L-glutamate. Zn(2+)-binding residues include His636, Cys638, and Glu660. Catalysis depends on His689, which acts as the Proton donor. A Zn(2+)-binding site is contributed by Cys721.

Belongs to the vitamin-B12 independent methionine synthase family. The cofactor is Zn(2+).

It carries out the reaction 5-methyltetrahydropteroyltri-L-glutamate + L-homocysteine = tetrahydropteroyltri-L-glutamate + L-methionine. The protein operates within amino-acid biosynthesis; L-methionine biosynthesis via de novo pathway; L-methionine from L-homocysteine (MetE route): step 1/1. In terms of biological role, catalyzes the transfer of a methyl group from 5-methyltetrahydrofolate to homocysteine resulting in methionine formation. This chain is 5-methyltetrahydropteroyltriglutamate--homocysteine methyltransferase, found in Streptococcus thermophilus (strain ATCC BAA-491 / LMD-9).